The primary structure comprises 345 residues: MDNHMLNRISKSPILPVVSYCMASILMTLTNKYVLSSPGYNMNFLLLTVQSTVCVAAIGILKRLKVINYRDFDFREAKFWFPISFLLVAMIYTASKALQFLSVPVYTIFKNLTIIIIAYGEVLWFGGHVTALTLFSFGLMVLSSIVAAWADIQSSSFASQTLNSGYLWMVLNCLTNAAFVLAMRKRIKLTNFRDFDTMFYNNLLSIPVLVICTLFTEDWSAENIAQNFPPDAKFGVLMAMAISGVSSVGISYTSAWCVRVTSSTTYSMVGALNKLPLAIAGLVFFDAPITFGSVTAILLGFISGVVYAVAKSQQQRQKDPATILPMTHNPVSASSQSMRDSLSKS.

The Cytoplasmic segment spans residues 1-8 (MDNHMLNR). A helical transmembrane segment spans residues 9–29 (ISKSPILPVVSYCMASILMTL). The Lumenal portion of the chain corresponds to 30–40 (TNKYVLSSPGY). Residues 41-61 (NMNFLLLTVQSTVCVAAIGIL) form a helical membrane-spanning segment. At 62–78 (KRLKVINYRDFDFREAK) the chain is on the cytoplasmic side. A helical transmembrane segment spans residues 79–101 (FWFPISFLLVAMIYTASKALQFL). The Lumenal portion of the chain corresponds to 102–104 (SVP). Residues 105-127 (VYTIFKNLTIIIIAYGEVLWFGG) form a helical membrane-spanning segment. The Cytoplasmic portion of the chain corresponds to 128 to 131 (HVTA). A helical transmembrane segment spans residues 132-150 (LTLFSFGLMVLSSIVAAWA). Over 151 to 161 (DIQSSSFASQT) the chain is Lumenal. The chain crosses the membrane as a helical span at residues 162–182 (LNSGYLWMVLNCLTNAAFVLA). Over 183 to 194 (MRKRIKLTNFRD) the chain is Cytoplasmic. A helical transmembrane segment spans residues 195–215 (FDTMFYNNLLSIPVLVICTLF). The Lumenal portion of the chain corresponds to 216 to 233 (TEDWSAENIAQNFPPDAK). A helical membrane pass occupies residues 234–254 (FGVLMAMAISGVSSVGISYTS). At 255–264 (AWCVRVTSST) the chain is on the cytoplasmic side. A helical membrane pass occupies residues 265-285 (TYSMVGALNKLPLAIAGLVFF). The Lumenal portion of the chain corresponds to 286 to 288 (DAP). A helical transmembrane segment spans residues 289–309 (ITFGSVTAILLGFISGVVYAV). Residues 310 to 345 (AKSQQQRQKDPATILPMTHNPVSASSQSMRDSLSKS) lie on the Cytoplasmic side of the membrane. Residues 319 to 345 (DPATILPMTHNPVSASSQSMRDSLSKS) are disordered. The segment covering 329-345 (NPVSASSQSMRDSLSKS) has biased composition (polar residues).

Belongs to the TPT transporter family. SLC35D subfamily. Homooligomer.

The protein localises to the golgi apparatus membrane. Its subcellular location is the cytoplasmic vesicle membrane. It is found in the endoplasmic reticulum membrane. In terms of biological role, involved in the import of GDP-mannose from the cytoplasm into the Golgi lumen. The polypeptide is GDP-mannose transporter (vrg4) (Schizosaccharomyces pombe (strain 972 / ATCC 24843) (Fission yeast)).